A 222-amino-acid chain; its full sequence is Interleukin-12 subunit alpha (222 aa).

The signal sequence occupies residues 1–25 (MCPPRGLLLVTILVLLNHLDHLSLA). 3 disulfides stabilise this stretch: Cys-40–Cys-113, Cys-67–Cys-199, and Cys-88–Cys-126. N-linked (GlcNAc...) asparagine glycosylation is found at Asn-42, Asn-96, Asn-110, and Asn-183.

This sequence belongs to the IL-6 superfamily. Heterodimer with IL12B; disulfide-linked. This heterodimer is known as interleukin IL-12. Heterodimer with EBI3/IL27B; not disulfide-linked. This heterodimer is known as interleukin IL-35. Interacts with NBR1; this interaction promotes IL-12 secretion.

It is found in the secreted. In terms of biological role, heterodimerizes with IL12B to form the IL-12 cytokine or with EBI3/IL27B to form the IL-35 cytokine. IL-12 is primarily produced by professional antigen-presenting cells (APCs) such as B-cells and dendritic cells (DCs) as well as macrophages and granulocytes and regulates T-cell and natural killer-cell responses, induces the production of interferon-gamma (IFN-gamma), favors the differentiation of T-helper 1 (Th1) cells and is an important link between innate resistance and adaptive immunity. Mechanistically, exerts its biological effects through a receptor composed of IL12R1 and IL12R2 subunits. Binding to the receptor results in the rapid tyrosine phosphorylation of a number of cellular substrates including the JAK family kinases TYK2 and JAK2. In turn, recruited STAT4 gets phosphorylated and translocates to the nucleus where it regulates cytokine/growth factor responsive genes. As part of IL-35, plays essential roles in maintaining the immune homeostasis of the liver microenvironment and also functions as an immune-suppressive cytokine. Mediates biological events through unconventional receptors composed of IL12RB2 and gp130/IL6ST heterodimers or homodimers. Signaling requires the transcription factors STAT1 and STAT4, which form a unique heterodimer that binds to distinct DNA sites. This is Interleukin-12 subunit alpha (IL12A) from Felis catus (Cat).